A 177-amino-acid chain; its full sequence is Peptide methionine sulfoxide reductase MsrA (177 aa).

Residue cysteine 10 is part of the active site.

Belongs to the MsrA Met sulfoxide reductase family.

It carries out the reaction L-methionyl-[protein] + [thioredoxin]-disulfide + H2O = L-methionyl-(S)-S-oxide-[protein] + [thioredoxin]-dithiol. It catalyses the reaction [thioredoxin]-disulfide + L-methionine + H2O = L-methionine (S)-S-oxide + [thioredoxin]-dithiol. Its function is as follows. Has an important function as a repair enzyme for proteins that have been inactivated by oxidation. Catalyzes the reversible oxidation-reduction of methionine sulfoxide in proteins to methionine. The polypeptide is Peptide methionine sulfoxide reductase MsrA (Saccharolobus solfataricus (strain ATCC 35092 / DSM 1617 / JCM 11322 / P2) (Sulfolobus solfataricus)).